We begin with the raw amino-acid sequence, 441 residues long: Serine/threonine-protein phosphatase 4 regulatory subunit 2 (441 aa).

Residues 201-213 (DEEEGFFDGDEDR) are compositionally biased toward acidic residues. Disordered stretches follow at residues 201-220 (DEEE…NKSK), 242-348 (INDD…LTTP), and 364-418 (SPSS…SQED). Positions 249–261 (NKGQNCQSDVTKN) are enriched in polar residues. Residues 264-302 (DDEDDDDNDDDYREDGADEDDEDDDHMGSTDDDEDDDED) show a composition bias toward acidic residues. At Thr-347 the chain carries Phosphothreonine. A compositionally biased stretch (basic and acidic residues) spans 388–398 (EDAHENHEGRS).

The protein belongs to the PPP4R2 family. In terms of assembly, regulatory subunit (R2) of the histone H2A phosphatase complex (HTP-C) consisting of PPH3, PSY2 and PSY4. Interacts with SPT4 and SPT5.

Its subcellular location is the nucleus. Its function is as follows. Regulatory subunit of the histone H2A phosphatase complex, which dephosphorylates H2AS128ph (gamma-H2A) that has been displaced from sites of DNA lesions in the double-stranded DNA break repair process. Dephosphorylation is necessary for efficient recovery from the DNA damage checkpoint. In Saccharomyces cerevisiae (strain ATCC 204508 / S288c) (Baker's yeast), this protein is Serine/threonine-protein phosphatase 4 regulatory subunit 2 (PSY4).